The primary structure comprises 703 residues: Calpain-8 (703 aa).

A Calpain catalytic domain is found at 45 to 344; it reads LFKDPEFPAC…YSRLEICNLS (300 aa). Catalysis depends on residues C105, H262, and N286. The interval 355–512 is domain III; that stretch reads KWNLVLFNGR…VFSEKKAKAL (158 aa). Residues 513–531 form a linker region; it reads EIGDTVSGHPHEPHPRDMD. EF-hand domains follow at residues 532 to 566, 575 to 608, 605 to 640, and 670 to 703; these read EEDE…VLSK, FNIN…LKIR, LKIR…AGFT, and IRLE…CVLV. The domain IV stretch occupies residues 532 to 703; the sequence is EEDEHVRSLF…LAEWLCCVLV (172 aa). Residues D588, D590, T592, S594, E599, D618, N620, T624, and E629 each contribute to the Ca(2+) site.

The protein belongs to the peptidase C2 family. In terms of assembly, monomer and homooligomer. Interacts with COPS1/GPS1, COPB1, EYA2, NME2, NME4 and TOMM70. Ca(2+) serves as cofactor. Undergoes autolytic cleavage between Ala-5 and Ala-6 which gives rise to fragments extending from Ala-6 to the C-terminus, Ala-6 to the EF-hand 2 domain and from Ala-6 to the beginning of domain III. Predominantly expressed in the stomach. Localizes strictly to the surface mucus cells in the gastric epithelium and the mucus-secreting goblet cells in the duodenum. Detected in the pituitary after estrogen stimulation.

It localises to the cytoplasm. The protein resides in the golgi apparatus. The catalysed reaction is Broad endopeptidase specificity.. In terms of biological role, calcium-regulated non-lysosomal thiol-protease. Involved in membrane trafficking in the gastric surface mucus cells (pit cells) and may involve the membrane trafficking of mucus cells via interactions with coat protein. Proteolytically cleaves the beta-subunit of coatomer complex. This is Calpain-8 (Capn8) from Rattus norvegicus (Rat).